A 123-amino-acid polypeptide reads, in one-letter code: Molluscan insulin-related peptide 1 (123 aa).

The N-terminal stretch at 1-31 (MAGVRLVFTKAFMVTVLLTLLLNIGVKPAEG) is a signal peptide. Q32 is subject to Pyrrolidone carboxylic acid. 3 cysteine pairs are disulfide-bonded: C48–C109, C60–C122, and C108–C113. Positions 68 to 69 (MV) are excised as a propeptide. Q99 bears the Pyrrolidone carboxylic acid mark.

The protein belongs to the insulin family. As to quaternary structure, heterodimer of a B chain and an A chain linked by two disulfide bonds. Expressed in the cerebral light-green cells which are giant neuroendocrines cells involved in the control of growth.

The protein localises to the cytoplasmic vesicle. It localises to the secretory vesicle. The polypeptide is Molluscan insulin-related peptide 1 (Lymnaea stagnalis (Great pond snail)).